The chain runs to 423 residues: Keratin, type I cytoskeletal 18 (423 aa).

The residue at position 2 (S2) is an N-acetylserine. Residues 2-71 (SFTTRSTTFS…GLAGMGGVQT (70 aa)) are head. Phosphoserine occurs at positions 7, 11, 16, and 19. Phosphoserine; alternate occurs at positions 31 and 32. 2 O-linked (GlcNAc) serine; alternate glycosylation sites follow: S31 and S32. Residue S35 is modified to Phosphoserine. The residue at position 37 (Y37) is a Phosphotyrosine. S43 is modified (phosphoserine). R46 is subject to Omega-N-methylarginine. A Phosphoserine; alternate modification is found at S50. An O-linked (GlcNAc) serine; alternate glycan is attached at S50. S52 carries the post-translational modification Phosphoserine; by MAPKAPK2 and MAPKAPK3. Residues S57 and S60 each carry the phosphoserine modification. The segment at 62-366 (GLAGMGGVQT…EALLNIKVKL (305 aa)) is necessary for interaction with PNN. The tract at residues 69–121 (VQTEKETMQDLNDRLASYLDKVKNLETENRRLESKIREYLEKRGPQGVRDWGH) is interaction with TRADD. Residues 72 to 107 (EKETMQDLNDRLASYLDKVKNLETENRRLESKIREY) form a coil 1A region. The region spanning 72-384 (EKETMQDLND…RLLEDGDDFS (313 aa)) is the IF rod domain. K73 is covalently cross-linked (Glycyl lysine isopeptide (Lys-Gly) (interchain with G-Cter in SUMO2)). S85 is subject to Phosphoserine. Positions 108–125 (LEKRGPQGVRDWGHYFKT) are linker 1. N6-acetyllysine is present on K124. Residues 126–217 (IEDLRAQIFA…KNHEEEVQGL (92 aa)) form a coil 1B region. A phosphoserine mark is found at S137 and S170. Residues 218–241 (EAQIASSGLTVEVDAPKSQDLSKI) are linker 12. The interaction with DNAJB6 stretch occupies residues 236 to 384 (QDLSKIMADI…RLLEDGDDFS (149 aa)). Residue K240 forms a Glycyl lysine isopeptide (Lys-Gly) (interchain with G-Cter in SUMO2) linkage. The interval 242–380 (MADIRAQYEQ…ATYRRLLEDG (139 aa)) is coil 2. T295 is modified (phosphothreonine). Glycyl lysine isopeptide (Lys-Gly) (interchain with G-Cter in SUMO2) cross-links involve residues K363 and K365. The interval 381–423 (DDFSLNDALDSSNSMQTVQRTTTRKVVDGKVVSETNDTRVLRH) is tail. Residues S384, S391, S392, and S394 each carry the phosphoserine modification. Phosphothreonine is present on T397. K410 is covalently cross-linked (Glycyl lysine isopeptide (Lys-Gly) (interchain with G-Cter in SUMO2)).

The protein belongs to the intermediate filament family. In terms of assembly, heterotetramer of two type I and two type II keratins. KRT18 associates with KRT8. Interacts with PNN and mutated CFTR. Interacts with YWHAE, YWHAH and YWHAZ only when phosphorylated. Interacts with DNAJB6, TCHP and TRADD. Interacts with the thrombin-antithrombin complex. Interacts with FAM83H. Interacts with EPPK1. Interacts with PKP1 and PKP2. Post-translationally, phosphorylation increases by IL-6. In terms of processing, proteolytically cleaved by caspases during epithelial cell apoptosis. Cleavage occurs at Asp-231 by either caspase-3, caspase-6 or caspase-7. Dephosphorylated by ethanol. Post-translationally, O-GlcNAcylation increases solubility, and decreases stability by inducing proteasomal degradation. Expressed on the plasma membrane of hepatocytes and in the narrow apical portions of supporting cells in the vomeronasal sensory epithelium. Detected in the type III alveolar cells of the lung, in the proliferative crypt epithelium of the small intestine and in the older intragemmal cells of the tongue.

It localises to the nucleus matrix. The protein localises to the cytoplasm. The protein resides in the perinuclear region. It is found in the nucleus. Its subcellular location is the nucleolus. In terms of biological role, when phosphorylated, plays a role in filament reorganization. Involved in the delivery of mutated CFTR to the plasma membrane. Together with KRT8, is involved in interleukin-6 (IL-6)-mediated barrier protection. Involved in the uptake of thrombin-antithrombin complexes by hepatic cells. This is Keratin, type I cytoskeletal 18 from Rattus norvegicus (Rat).